The primary structure comprises 177 residues: ATP synthase subunit b (177 aa).

Residues 16–36 traverse the membrane as a helical segment; sequence HLLLANMIVTIVVFLLLLILL.

Belongs to the ATPase B chain family. F-type ATPases have 2 components, F(1) - the catalytic core - and F(0) - the membrane proton channel. F(1) has five subunits: alpha(3), beta(3), gamma(1), delta(1), epsilon(1). F(0) has three main subunits: a(1), b(2) and c(10-14). The alpha and beta chains form an alternating ring which encloses part of the gamma chain. F(1) is attached to F(0) by a central stalk formed by the gamma and epsilon chains, while a peripheral stalk is formed by the delta and b chains.

It is found in the cell membrane. In terms of biological role, f(1)F(0) ATP synthase produces ATP from ADP in the presence of a proton or sodium gradient. F-type ATPases consist of two structural domains, F(1) containing the extramembraneous catalytic core and F(0) containing the membrane proton channel, linked together by a central stalk and a peripheral stalk. During catalysis, ATP synthesis in the catalytic domain of F(1) is coupled via a rotary mechanism of the central stalk subunits to proton translocation. Its function is as follows. Component of the F(0) channel, it forms part of the peripheral stalk, linking F(1) to F(0). The polypeptide is ATP synthase subunit b (Exiguobacterium sibiricum (strain DSM 17290 / CCUG 55495 / CIP 109462 / JCM 13490 / 255-15)).